We begin with the raw amino-acid sequence, 158 residues long: Cyclic pyranopterin monophosphate synthase (158 aa).

Substrate is bound by residues 73–75 (LCH) and 110–111 (ME). The active site involves Asp-125.

Belongs to the MoaC family. As to quaternary structure, homohexamer; trimer of dimers.

The enzyme catalyses (8S)-3',8-cyclo-7,8-dihydroguanosine 5'-triphosphate = cyclic pyranopterin phosphate + diphosphate. Its pathway is cofactor biosynthesis; molybdopterin biosynthesis. In terms of biological role, catalyzes the conversion of (8S)-3',8-cyclo-7,8-dihydroguanosine 5'-triphosphate to cyclic pyranopterin monophosphate (cPMP). This Ectopseudomonas mendocina (strain ymp) (Pseudomonas mendocina) protein is Cyclic pyranopterin monophosphate synthase.